We begin with the raw amino-acid sequence, 1855 residues long: Chitin synthase 5 (1855 aa).

The Myosin motor domain maps to 1–778 (MSSAPTTQQN…CWRQIVRAGD (778 aa)). 95 to 102 (GESGTGKT) is an ATP binding site. N-linked (GlcNAc...) asparagine glycosylation is found at Asn-221, Asn-520, and Asn-558. Residues 585-650 (AVQQASVASK…PKSADTQQGA (66 aa)) are disordered. An actin-binding region spans residues 658 to 682 (LDNINKSLTAPNTNPYFFFCLKPND). Asn-662 carries N-linked (GlcNAc...) asparagine glycosylation. 2 helical membrane passes run 887–907 (WLVL…RIIG) and 922–942 (VAIN…MVGF). A Cytochrome b5 heme-binding domain is found at 950–1008 (QHVFSPSELTSYDGKNSDAYVAIRGNVFDLGAFIPQHYPSIVPASALEKYAGTDATNLF). 2 N-linked (GlcNAc...) asparagine glycosylation sites follow: Asn-1037 and Asn-1061. A helical transmembrane segment spans residues 1199–1219 (ILLAVSIMLVSVICFKFLAAL). 3 N-linked (GlcNAc...) asparagine glycosylation sites follow: Asn-1422, Asn-1456, and Asn-1562. Transmembrane regions (helical) follow at residues 1587–1607 (FVVF…GYIV), 1621–1641 (ATTA…IFIV), and 1650–1670 (WMII…LIAF). N-linked (GlcNAc...) asparagine glycans are attached at residues Asn-1755 and Asn-1767. The DEK-C domain occupies 1797–1852 (MPNDDAILAEIREILATADLMTVTKKSIKAELERRFGVPMDSRRQYIGSATEAILS).

In the N-terminal section; belongs to the TRAFAC class myosin-kinesin ATPase superfamily. Myosin family. It in the C-terminal section; belongs to the chitin synthase family. Class V subfamily.

It is found in the apical cell membrane. Its subcellular location is the cell septum. The protein localises to the cell tip. It catalyses the reaction [(1-&gt;4)-N-acetyl-beta-D-glucosaminyl](n) + UDP-N-acetyl-alpha-D-glucosamine = [(1-&gt;4)-N-acetyl-beta-D-glucosaminyl](n+1) + UDP + H(+). In terms of biological role, polymerizes chitin, a structural polymer of the cell wall and septum, by transferring the sugar moiety of UDP-GlcNAc to the non-reducing end of the growing chitin polymer. This is Chitin synthase 5 from Zymoseptoria tritici (strain CBS 115943 / IPO323) (Speckled leaf blotch fungus).